The sequence spans 142 residues: Large ribosomal subunit protein uL11 (142 aa).

The protein belongs to the universal ribosomal protein uL11 family. Part of the ribosomal stalk of the 50S ribosomal subunit. Interacts with L10 and the large rRNA to form the base of the stalk. L10 forms an elongated spine to which L12 dimers bind in a sequential fashion forming a multimeric L10(L12)X complex. One or more lysine residues are methylated.

In terms of biological role, forms part of the ribosomal stalk which helps the ribosome interact with GTP-bound translation factors. This chain is Large ribosomal subunit protein uL11, found in Shewanella baltica (strain OS223).